The chain runs to 404 residues: uncharacterized protein (404 aa).

This is an uncharacterized protein from Alcelaphine herpesvirus 1 (strain C500) (AlHV-1).